A 123-amino-acid polypeptide reads, in one-letter code: Histone H2B (123 aa).

Positions 1–30 (MPPKTSGKAAKKAGKAQKNITKTDKKKKRK) are disordered. At Pro2 the chain carries N-methylproline; partial. The residue at position 44 (Lys44) is an N6-succinyllysine. An O-linked (GlcNAc) serine glycan is attached at Ser110. An N6-succinyllysine mark is found at Lys114 and Lys118. Residue Lys118 forms a Glycyl lysine isopeptide (Lys-Gly) (interchain with G-Cter in ubiquitin) linkage.

This sequence belongs to the histone H2B family. In terms of assembly, the nucleosome is a histone octamer containing two molecules each of H2A, H2B, H3 and H4 assembled in one H3-H4 heterotetramer and two H2A-H2B heterodimers. The octamer wraps approximately 147 bp of DNA. Phosphorylated by the catalytic component of the Dbf4-dependent kinase (DDK) complex Cdc7. In terms of processing, monoubiquitination of Lys-118 by Bre1 gives a specific tag for epigenetic transcriptional activation and is also prerequisite for histone H3 'Lys-4' and 'Lys-79' methylation. Deubiquitination of Lys-118 by the SAGA complex is involved in activating transcription of a large subset of genes. Post-translationally, methylation at Pro-2 increases upon heat shock. GlcNAcylation at Ser-110 promotes monoubiquitination of Lys-118. It fluctuates in response to extracellular glucose, and associates with transcribed genes.

The protein localises to the nucleus. It localises to the chromosome. In terms of biological role, core component of nucleosome. Nucleosomes wrap and compact DNA into chromatin, limiting DNA accessibility to the cellular machineries which require DNA as a template. Histones thereby play a central role in transcription regulation, DNA repair, DNA replication and chromosomal stability. DNA accessibility is regulated via a complex set of post-translational modifications of histones, also called histone code, and nucleosome remodeling. The chain is Histone H2B (His2B) from Drosophila erecta (Fruit fly).